A 190-amino-acid chain; its full sequence is Small ribosomal subunit protein uS5 (190 aa).

An S5 DRBM domain is found at 22–85 (FVDKLVHINR…ESAKRNLTRV (64 aa)).

Belongs to the universal ribosomal protein uS5 family. Part of the 30S ribosomal subunit. Contacts proteins S4 and S8.

Functionally, with S4 and S12 plays an important role in translational accuracy. Located at the back of the 30S subunit body where it stabilizes the conformation of the head with respect to the body. The polypeptide is Small ribosomal subunit protein uS5 (Rhodopseudomonas palustris (strain BisB18)).